Reading from the N-terminus, the 1377-residue chain is Temperature-sensitive hemagglutinin tsh autotransporter (1377 aa).

The first 52 residues, 1-52 (MNRIYSLRYSAVARGFIAVSEFARKCVHKSVRRLCFPVLLLIPVLFSAGSLA), serve as a signal peptide directing secretion. One can recognise a Peptidase S6 domain in the interval 53-302 (GTVNNELGYQ…AVIPLDFIGQ (250 aa)). Active-site charge relay system residues include H125, D153, and S259. The region spanning 1111 to 1377 (DINGEAGTWV…AINANIRYSF (267 aa)) is the Autotransporter domain.

In terms of processing, the C-terminus is blocked. Cleaved to release the mature protein from the outer membrane.

The protein localises to the periplasm. It localises to the secreted. Its subcellular location is the cell surface. It is found in the cell outer membrane. Functionally, contributes to the development of lesions and deposition of fibrin in the avian air sacs. It can act both as an adhesin and as a serine protease. Agglutinates erythrocytes while in contact with the extracellular surface of the bacterial cells. Can adhere to purified hemoglobin and bind with great efficiency to extracellular matrix proteins. Cleaves casein and exhibits mucinolytic activity. This Escherichia coli protein is Temperature-sensitive hemagglutinin tsh autotransporter (tsh).